Here is a 57-residue protein sequence, read N- to C-terminus: Large ribosomal subunit protein bL32 (57 aa).

Residues 1–19 are compositionally biased toward basic residues; sequence MAVPKRRMSRSNTRSRRSQ. Residues 1-22 form a disordered region; the sequence is MAVPKRRMSRSNTRSRRSQWKA.

The protein belongs to the bacterial ribosomal protein bL32 family.

In Rhodococcus jostii (strain RHA1), this protein is Large ribosomal subunit protein bL32.